A 381-amino-acid polypeptide reads, in one-letter code: MPFGNTHNKWKLNYSAAEEFPDLSKHNNHMAKALTLDIYKKLRDKETPSGFTLDDVIQTGVDNPGHPFIMTVGCVAGDEECYEVFKDLFDPVIEDRHGGYKPTDKHKTDLNQDNLKGGDDLDPNYVLSSRVRTGRSIKGIALPPHCSRGERRLVEKLCIEGLATLTGEFQGKYYPLSTMSDAEQQQLIDDHFLFDKPISPLLLASGMARDWPDGRGIWHNNDKSFLVWVNEEDHLRVISMQKGGNMKEVFRRFCVGLKKIEEIFVKAGRGFMWNEHLGYVLTCPSNLGTGLRGGVHVKIPHLCKHEKFSEVLKRTRLQKRGTGGVDTEAVGSIYDISNADRLGFSEVEQVQMVVDGVKLMVEMEKRLENGKSIDDLIPAQK.

In terms of domain architecture, Phosphagen kinase N-terminal spans 11–98 (KLNYSAAEEF…FDPVIEDRHG (88 aa)). Residues 125–367 (YVLSSRVRTG…KLMVEMEKRL (243 aa)) form the Phosphagen kinase C-terminal domain. ATP is bound by residues 128 to 132 (SSRVR), His-191, Arg-236, Arg-292, 320 to 325 (RGTGGV), and Asp-335.

This sequence belongs to the ATP:guanido phosphotransferase family. Dimer of identical or non-identical chains. With MM being the major form in skeletal muscle and myocardium, MB existing in myocardium, and BB existing in many tissues, especially brain.

The protein localises to the cytoplasm. It carries out the reaction creatine + ATP = N-phosphocreatine + ADP + H(+). Its function is as follows. Reversibly catalyzes the transfer of phosphate between ATP and various phosphogens (e.g. creatine phosphate). Creatine kinase isoenzymes play a central role in energy transduction in tissues with large, fluctuating energy demands, such as skeletal muscle, heart, brain and spermatozoa. The protein is Creatine kinase M-type of Torpedo marmorata (Marbled electric ray).